The following is a 510-amino-acid chain: NAD(P)H-quinone oxidoreductase subunit 2 B, chloroplastic (510 aa).

The next 13 membrane-spanning stretches (helical) occupy residues 24-44 (LLLF…GLIL), 57-77 (IPWL…ALLF), 99-119 (IFQF…VEYI), 124-144 (MAIT…MFLC), 149-169 (LITI…LSGY), 183-203 (YLLM…WLYG), 227-247 (PGIS…LSPA), 295-315 (WHLH…LIAI), 323-343 (MLAY…IVGD), 347-367 (GYAS…GTFA), 395-415 (ALSL…AGFF), 418-438 (LHLF…IGLL), and 484-504 (MIVC…IIAI).

It belongs to the complex I subunit 2 family. As to quaternary structure, NDH is composed of at least 16 different subunits, 5 of which are encoded in the nucleus.

The protein resides in the plastid. It localises to the chloroplast thylakoid membrane. The enzyme catalyses a plastoquinone + NADH + (n+1) H(+)(in) = a plastoquinol + NAD(+) + n H(+)(out). The catalysed reaction is a plastoquinone + NADPH + (n+1) H(+)(in) = a plastoquinol + NADP(+) + n H(+)(out). Functionally, NDH shuttles electrons from NAD(P)H:plastoquinone, via FMN and iron-sulfur (Fe-S) centers, to quinones in the photosynthetic chain and possibly in a chloroplast respiratory chain. The immediate electron acceptor for the enzyme in this species is believed to be plastoquinone. Couples the redox reaction to proton translocation, and thus conserves the redox energy in a proton gradient. The protein is NAD(P)H-quinone oxidoreductase subunit 2 B, chloroplastic of Buxus microphylla (Littleleaf boxwood).